A 961-amino-acid chain; its full sequence is E4 ubiquitin-protein ligase UFD2 (961 aa).

The 75-residue stretch at 880 to 954 (DVPDEFLDPL…LCFKKQKKEE (75 aa)) folds into the U-box domain.

The protein belongs to the ubiquitin conjugation factor E4 family. Interacts with CDC48. Interacts with the ubiquitin-like domain of RAD23 and DSK2. Interacts with PEX29.

Its subcellular location is the cytoplasm. The protein localises to the nucleus. The catalysed reaction is S-ubiquitinyl-[E2 ubiquitin-conjugating enzyme]-L-cysteine + [acceptor protein]-L-lysine = [E2 ubiquitin-conjugating enzyme]-L-cysteine + N(6)-ubiquitinyl-[acceptor protein]-L-lysine.. Its pathway is protein modification; protein ubiquitination. Functionally, E4 ubiquitin chain-elongation enzyme specifically involved in polyubiquitin chain assembly. Binds to CDC48 and elongates mono- and diubiquitinated ERAD substrates presented by the UFD1-NPL4-CDC48/p97 (UNC) AAA ATPase complex to a chain length of 4 to 6 ubiquitin moieties. Delivers these polyubiquitinated substrates to RAD23 and DSK2, which target them to the proteasome. Has E3 ubiquitin-protein ligase activity, accepting ubiquitin from its cognate E2 ubiquitin-conjugating enzyme UBC4. Enhances ubiquitination at 'Lys-48', but not at 'Lys-29' of the Ub moiety. Promotes ubiquitin chain elongation at 'Lys-48' on the DOA10 substrate PEX29. Also involved in the proteolytic processing of the ER-bound transcription factor SPT23. This chain is E4 ubiquitin-protein ligase UFD2 (UFD2), found in Saccharomyces cerevisiae (strain ATCC 204508 / S288c) (Baker's yeast).